Here is a 299-residue protein sequence, read N- to C-terminus: Acetylglutamate kinase (299 aa).

Substrate is bound by residues 72–73, arginine 94, and asparagine 196; that span reads GG.

It belongs to the acetylglutamate kinase family. ArgB subfamily.

The protein resides in the cytoplasm. The catalysed reaction is N-acetyl-L-glutamate + ATP = N-acetyl-L-glutamyl 5-phosphate + ADP. It participates in amino-acid biosynthesis; L-arginine biosynthesis; N(2)-acetyl-L-ornithine from L-glutamate: step 2/4. Functionally, catalyzes the ATP-dependent phosphorylation of N-acetyl-L-glutamate. The chain is Acetylglutamate kinase from Burkholderia cenocepacia (strain ATCC BAA-245 / DSM 16553 / LMG 16656 / NCTC 13227 / J2315 / CF5610) (Burkholderia cepacia (strain J2315)).